Here is a 259-residue protein sequence, read N- to C-terminus: Glutathione S-transferase domain-containing protein DDB_G0274705 (259 aa).

Positions 7-96 constitute a GST N-terminal domain; the sequence is KIDYIFYTNN…YLAQKFNTFL (90 aa). The GST C-terminal domain occupies 102–232; the sequence is NPLENSEVIT…GFKNFNPSLL (131 aa).

The protein belongs to the GST superfamily.

The polypeptide is Glutathione S-transferase domain-containing protein DDB_G0274705 (Dictyostelium discoideum (Social amoeba)).